Here is a 167-residue protein sequence, read N- to C-terminus: Crossover junction endodeoxyribonuclease RuvC (167 aa).

Catalysis depends on residues Asp7, Glu67, and Asp139. Residues Asp7, Glu67, and Asp139 each coordinate Mg(2+).

This sequence belongs to the RuvC family. Homodimer which binds Holliday junction (HJ) DNA. The HJ becomes 2-fold symmetrical on binding to RuvC with unstacked arms; it has a different conformation from HJ DNA in complex with RuvA. In the full resolvosome a probable DNA-RuvA(4)-RuvB(12)-RuvC(2) complex forms which resolves the HJ. Requires Mg(2+) as cofactor.

The protein localises to the cytoplasm. The catalysed reaction is Endonucleolytic cleavage at a junction such as a reciprocal single-stranded crossover between two homologous DNA duplexes (Holliday junction).. Functionally, the RuvA-RuvB-RuvC complex processes Holliday junction (HJ) DNA during genetic recombination and DNA repair. Endonuclease that resolves HJ intermediates. Cleaves cruciform DNA by making single-stranded nicks across the HJ at symmetrical positions within the homologous arms, yielding a 5'-phosphate and a 3'-hydroxyl group; requires a central core of homology in the junction. The consensus cleavage sequence is 5'-(A/T)TT(C/G)-3'. Cleavage occurs on the 3'-side of the TT dinucleotide at the point of strand exchange. HJ branch migration catalyzed by RuvA-RuvB allows RuvC to scan DNA until it finds its consensus sequence, where it cleaves and resolves the cruciform DNA. This chain is Crossover junction endodeoxyribonuclease RuvC, found in Zymomonas mobilis subsp. mobilis (strain ATCC 31821 / ZM4 / CP4).